The chain runs to 453 residues: tRNA modification GTPase MnmE (453 aa).

(6S)-5-formyl-5,6,7,8-tetrahydrofolate is bound by residues Arg-28, Glu-86, and Lys-125. Residues 221 to 375 enclose the TrmE-type G domain; it reads GIKIAIVGEP…LIKYLEETSL (155 aa). Asn-231 is a K(+) binding site. GTP-binding positions include 231–236, 250–256, and 276–279; these read NAGKSS, TNIPGTT, and DTAG. Ser-235 provides a ligand contact to Mg(2+). The K(+) site is built by Thr-250, Ile-252, and Thr-255. Mg(2+) is bound at residue Thr-256. Lys-453 serves as a coordination point for (6S)-5-formyl-5,6,7,8-tetrahydrofolate.

The protein belongs to the TRAFAC class TrmE-Era-EngA-EngB-Septin-like GTPase superfamily. TrmE GTPase family. Homodimer. Heterotetramer of two MnmE and two MnmG subunits. It depends on K(+) as a cofactor.

Its subcellular location is the cytoplasm. Functionally, exhibits a very high intrinsic GTPase hydrolysis rate. Involved in the addition of a carboxymethylaminomethyl (cmnm) group at the wobble position (U34) of certain tRNAs, forming tRNA-cmnm(5)s(2)U34. This Mycoplasmoides gallisepticum (strain R(low / passage 15 / clone 2)) (Mycoplasma gallisepticum) protein is tRNA modification GTPase MnmE.